We begin with the raw amino-acid sequence, 617 residues long: ATP-dependent RNA helicase DBP1 (617 aa).

The tract at residues 1 to 90 (MADLPQKVSN…TSANYNRGGS (90 aa)) is disordered. A compositionally biased stretch (polar residues) spans 7–17 (KVSNLSINNKE). Over residues 38-58 (PSFERSTPKQEDKVTGGDFFR) the composition is skewed to basic and acidic residues. The segment covering 79–90 (GGTSANYNRGGS) has biased composition (polar residues). Residues 154-182 (LDFSSPPLDELLMENIKLASFTKPTPVQK) carry the Q motif motif. The region spanning 185-374 (IPIVTKGRDL…RDFLDNYIFL (190 aa)) is the Helicase ATP-binding domain. 198–205 (AQTGSGKT) lines the ATP pocket. Positions 318–321 (DEAD) match the DEAD box motif. The 161-residue stretch at 385–545 (NITQRILYVD…EVPTFLSDLS (161 aa)) folds into the Helicase C-terminal domain. The disordered stretch occupies residues 542-617 (SDLSRQNSRG…GYGNSNASWW (76 aa)). A compositionally biased stretch (polar residues) spans 580–594 (FGSTRPRNTGTSNWG).

Belongs to the DEAD box helicase family. DDX3/DED1 subfamily.

Its subcellular location is the cytoplasm. The enzyme catalyses ATP + H2O = ADP + phosphate + H(+). Its function is as follows. ATP-binding RNA helicase involved in translation initiation. Remodels RNA in response to ADP and ATP concentrations by facilitating disruption, but also formation of RNA duplexes. Redundant to DED1, may be required in conditions in which DED1 expression is decreased. The polypeptide is ATP-dependent RNA helicase DBP1 (DBP1) (Saccharomyces cerevisiae (strain ATCC 204508 / S288c) (Baker's yeast)).